Here is a 622-residue protein sequence, read N- to C-terminus: Iron transport multicopper oxidase FET3 (622 aa).

The N-terminal stretch at 1–22 (MRPKLLSVEAALFLALPELARA) is a signal peptide. Residues 23–553 (ATRKFDFEIG…NTLPPGFTPR (531 aa)) are Extracellular-facing. Plastocyanin-like domains lie at 31–146 (IGWV…VHDK), 156–303 (EEVV…VYDK), and 363–498 (YTEA…VEDP). N76 carries an N-linked (GlcNAc...) asparagine glycan. Residues H82 and H84 each coordinate Cu cation. N-linked (GlcNAc...) asparagine glycans are attached at residues N89 and N114. H126 and H128 together coordinate Cu cation. N196, N200, and N294 each carry an N-linked (GlcNAc...) asparagine glycan. Residues H414, H417, and H419 each contribute to the Cu cation site. A glycan (N-linked (GlcNAc...) asparagine) is linked at N440. H479, C480, H481, and H485 together coordinate Cu cation. A helical transmembrane segment spans residues 554 to 574 (GIVALVFSCICGILGVAVVAW). The Cytoplasmic portion of the chain corresponds to 575–622 (YGFSAPVGSTSAGALSAGLVENDSGDVHSAQKGPQETVVSPTGDARSH). Residues 597-622 (DSGDVHSAQKGPQETVVSPTGDARSH) form a disordered region.

The protein belongs to the multicopper oxidase family.

It localises to the cell membrane. Its function is as follows. Cell surface ferroxidase; part of the reductive iron assimilatory system (RIA), a siderophore-independent iron acquisition process. Required to oxidize Fe(2+) and release it from the transporter. Seems not to be involved in virulence. This Gibberella zeae (strain ATCC MYA-4620 / CBS 123657 / FGSC 9075 / NRRL 31084 / PH-1) (Wheat head blight fungus) protein is Iron transport multicopper oxidase FET3.